We begin with the raw amino-acid sequence, 476 residues long: Bifunctional protein HldE (476 aa).

Residues 1–318 (MKPILPDYSQ…AEAIHGSQDT (318 aa)) are ribokinase. 195-198 (NMAE) lines the ATP pocket. The active site involves Asp264. Residues 344 to 476 (MTNGCFDILH…IIKAIKGGRG (133 aa)) form a cytidylyltransferase region.

The protein in the N-terminal section; belongs to the carbohydrate kinase PfkB family. In the C-terminal section; belongs to the cytidylyltransferase family. Homodimer.

The enzyme catalyses D-glycero-beta-D-manno-heptose 7-phosphate + ATP = D-glycero-beta-D-manno-heptose 1,7-bisphosphate + ADP + H(+). It carries out the reaction D-glycero-beta-D-manno-heptose 1-phosphate + ATP + H(+) = ADP-D-glycero-beta-D-manno-heptose + diphosphate. The protein operates within nucleotide-sugar biosynthesis; ADP-L-glycero-beta-D-manno-heptose biosynthesis; ADP-L-glycero-beta-D-manno-heptose from D-glycero-beta-D-manno-heptose 7-phosphate: step 1/4. It participates in nucleotide-sugar biosynthesis; ADP-L-glycero-beta-D-manno-heptose biosynthesis; ADP-L-glycero-beta-D-manno-heptose from D-glycero-beta-D-manno-heptose 7-phosphate: step 3/4. Catalyzes the phosphorylation of D-glycero-D-manno-heptose 7-phosphate at the C-1 position to selectively form D-glycero-beta-D-manno-heptose-1,7-bisphosphate. Its function is as follows. Catalyzes the ADP transfer from ATP to D-glycero-beta-D-manno-heptose 1-phosphate, yielding ADP-D-glycero-beta-D-manno-heptose. The sequence is that of Bifunctional protein HldE from Vibrio atlanticus (strain LGP32) (Vibrio splendidus (strain Mel32)).